Here is a 160-residue protein sequence, read N- to C-terminus: Interleukin-36 alpha (160 aa).

A propeptide spanning residues 1–7 is cleaved from the precursor; the sequence is MNKEKEL. Tyr98 carries the post-translational modification 3'-nitrotyrosine.

It belongs to the IL-1 family. Interacts with TMED10; the interaction mediates the translocation from the cytoplasm into the ERGIC (endoplasmic reticulum-Golgi intermediate compartment) and thereby secretion. In terms of processing, N-terminal truncation leads to a dramatic enhancement of its activity (&gt;1000-fold). In terms of tissue distribution, highly expressed in embryonic tissue and in tissues containing epithelial cells. Elevated expression levels are detected in chronic kidney disease; expressed inepithelia from the distal convoluted tubules (DCTs) to the cortical collecting ducts (CCDs) in single nephrons (at protein level).

The protein localises to the cytoplasm. It localises to the secreted. In terms of biological role, cytokine that binds to and signals through the IL1RL2/IL-36R receptor which in turn activates NF-kappa-B and MAPK signaling pathways in target cells linked to a pro-inflammatory response. Part of the IL-36 signaling system that is thought to be present in epithelial barriers and to take part in local inflammatory response; similar to the IL-1 system with which it shares the coreceptor IL1RAP. Seems to be involved in skin inflammatory response by acting on keratinocytes, dendritic cells and indirectly on T-cells to drive tissue infiltration, cell maturation and cell proliferation. Induces the production of pro-inflammatory cytokines, including IL-12, Il-1 beta, IL-6, TNF-alpha and IL-23 in bone marrow-derived dendritic cells (BMDCs). Involved in dendritic cell maturation by stimulating the surface expression of CD80, CD86 and MHC class II. Induces the production of IFN-gamma, IL-4 and IL-17 by cultured CD4(+) T-cells and splenocytes. May play a role in pro-inflammatory effects in the lung: induces the expression of CXCL1 and CXCL2 in the lung, and the expression of TNF-alpha, IL-36c, IL-1A, IL-1B, CXCL1 and CXCL2 in isolated splenic CD11c(+) alveolar macrophages. May be involved in T-cell maturation by stimulating the surface expression of CD40 and modestly CD80 and CD86 in splenic CD11c(+) cells. May be involved in CD4(+) T-cell proliferation. Induces NF-kappa B activation in macrophages. The polypeptide is Interleukin-36 alpha (Mus musculus (Mouse)).